A 94-amino-acid chain; its full sequence is Small ribosomal subunit protein uS17 (94 aa).

It belongs to the universal ribosomal protein uS17 family. As to quaternary structure, part of the 30S ribosomal subunit.

In terms of biological role, one of the primary rRNA binding proteins, it binds specifically to the 5'-end of 16S ribosomal RNA. The sequence is that of Small ribosomal subunit protein uS17 from Streptomyces griseus subsp. griseus (strain JCM 4626 / CBS 651.72 / NBRC 13350 / KCC S-0626 / ISP 5235).